A 130-amino-acid chain; its full sequence is Anti-adapter protein IraD (130 aa).

This sequence belongs to the GpW/Gp25 family. IraD subfamily. Interacts with RssB.

It localises to the cytoplasm. Its function is as follows. Inhibits RpoS proteolysis by regulating RssB activity, thereby increasing the stability of the sigma stress factor RpoS during oxidative stress. Its effect on RpoS stability is due to its interaction with RssB, which probably blocks the interaction of RssB with RpoS, and the consequent delivery of the RssB-RpoS complex to the ClpXP protein degradation pathway. The chain is Anti-adapter protein IraD from Escherichia coli O139:H28 (strain E24377A / ETEC).